We begin with the raw amino-acid sequence, 184 residues long: Transcription termination/antitermination protein NusG (184 aa).

Residues 133–163 (EGDQVRVVSGPFADFTGTVTEINPERGKVKV) enclose the KOW domain.

This sequence belongs to the NusG family.

Participates in transcription elongation, termination and antitermination. This Thermus thermophilus (strain ATCC 27634 / DSM 579 / HB8) protein is Transcription termination/antitermination protein NusG.